Reading from the N-terminus, the 54-residue chain is Small, acid-soluble spore protein gamma-type (54 aa).

Residues 1–54 (MAKKNRNKQQQEMQQQQQQHQAEFANEFAEGSSAEQARQQQQKAAGKRQKKNQQ) are disordered. Composition is skewed to low complexity over residues 10-21 (QQEMQQQQQQHQ) and 29-44 (AEGSSAEQARQQQQKA). Residues 45 to 54 (AGKRQKKNQQ) show a composition bias toward basic residues.

The protein belongs to the gamma-type SASP family.

Its function is as follows. SASP are proteins degraded in the first minutes of spore germination and provide amino acids for both new protein synthesis and metabolism. These proteins may be involved in dormant spore's high resistance to UV light. This chain is Small, acid-soluble spore protein gamma-type (sspA), found in Alkalihalophilus pseudofirmus (strain ATCC BAA-2126 / JCM 17055 / OF4) (Bacillus pseudofirmus).